The primary structure comprises 460 residues: GTPase Der (460 aa).

EngA-type G domains follow at residues 3–167 and 189–364; these read FTIA…PEPT and IRVA…AIWN. Residues 9 to 16, 56 to 60, 119 to 122, 195 to 202, 242 to 246, and 307 to 310 contribute to the GTP site; these read GRPNVGKS, DTAGL, NKSE, GRPNAGKS, and NKWD. The KH-like domain maps to 365 to 449; the sequence is RRVPTAALNR…PIRITLREKA (85 aa).

The protein belongs to the TRAFAC class TrmE-Era-EngA-EngB-Septin-like GTPase superfamily. EngA (Der) GTPase family. In terms of assembly, associates with the 50S ribosomal subunit.

Its function is as follows. GTPase that plays an essential role in the late steps of ribosome biogenesis. This Nitrobacter hamburgensis (strain DSM 10229 / NCIMB 13809 / X14) protein is GTPase Der.